Reading from the N-terminus, the 395-residue chain is Succinyl-diaminopimelate desuccinylase (395 aa).

Zn(2+) is bound at residue His-74. The active site involves Asp-76. Asp-107 contributes to the Zn(2+) binding site. Glu-141 (proton acceptor) is an active-site residue. Positions 142, 170, and 368 each coordinate Zn(2+).

The protein belongs to the peptidase M20A family. DapE subfamily. Homodimer. Zn(2+) serves as cofactor. Requires Co(2+) as cofactor.

It catalyses the reaction N-succinyl-(2S,6S)-2,6-diaminopimelate + H2O = (2S,6S)-2,6-diaminopimelate + succinate. It participates in amino-acid biosynthesis; L-lysine biosynthesis via DAP pathway; LL-2,6-diaminopimelate from (S)-tetrahydrodipicolinate (succinylase route): step 3/3. In terms of biological role, catalyzes the hydrolysis of N-succinyl-L,L-diaminopimelic acid (SDAP), forming succinate and LL-2,6-diaminopimelate (DAP), an intermediate involved in the bacterial biosynthesis of lysine and meso-diaminopimelic acid, an essential component of bacterial cell walls. The chain is Succinyl-diaminopimelate desuccinylase from Brucella anthropi (strain ATCC 49188 / DSM 6882 / CCUG 24695 / JCM 21032 / LMG 3331 / NBRC 15819 / NCTC 12168 / Alc 37) (Ochrobactrum anthropi).